A 35-amino-acid polypeptide reads, in one-letter code: UPF0387 membrane protein YohO (35 aa).

A helical transmembrane segment spans residues 6 to 26; sequence IGVIALFLFMALGGIGGVMLA.

It belongs to the UPF0387 family.

The protein resides in the cell inner membrane. The polypeptide is UPF0387 membrane protein YohO (Shigella boydii serotype 4 (strain Sb227)).